Here is a 367-residue protein sequence, read N- to C-terminus: Histidinol-phosphate aminotransferase (367 aa).

An N6-(pyridoxal phosphate)lysine modification is found at lysine 230.

It belongs to the class-II pyridoxal-phosphate-dependent aminotransferase family. Histidinol-phosphate aminotransferase subfamily. As to quaternary structure, homodimer. Pyridoxal 5'-phosphate is required as a cofactor.

It catalyses the reaction L-histidinol phosphate + 2-oxoglutarate = 3-(imidazol-4-yl)-2-oxopropyl phosphate + L-glutamate. It functions in the pathway amino-acid biosynthesis; L-histidine biosynthesis; L-histidine from 5-phospho-alpha-D-ribose 1-diphosphate: step 7/9. The chain is Histidinol-phosphate aminotransferase from Thermobifida fusca (strain YX).